The primary structure comprises 137 residues: DNA-binding protein H-NS (137 aa).

The DNA-binding element occupies 112 to 117; that stretch reads QGRTPA.

This sequence belongs to the histone-like protein H-NS family. Homodimer that oligomerizes on DNA into higher-order complexes that form bridges between disparate regions of DNA compacting it. Interacts with Hha, YdgT and StpA.

Its subcellular location is the cytoplasm. The protein localises to the nucleoid. Its function is as follows. A DNA-binding protein implicated in transcriptional repression and chromosome organization and compaction. Binds nucleation sites in AT-rich DNA and bridges them, forming higher-order nucleoprotein complexes and condensing the chromosome. As many horizontally transferred genes are AT-rich, it plays a central role in silencing foreign genes. A subset of genes are repressed by H-NS in association with other proteins. In Salmonella paratyphi A (strain ATCC 9150 / SARB42), this protein is DNA-binding protein H-NS (hns).